The primary structure comprises 571 residues: Proline--tRNA ligase (571 aa).

Belongs to the class-II aminoacyl-tRNA synthetase family. ProS type 1 subfamily. In terms of assembly, homodimer.

The protein resides in the cytoplasm. The catalysed reaction is tRNA(Pro) + L-proline + ATP = L-prolyl-tRNA(Pro) + AMP + diphosphate. Functionally, catalyzes the attachment of proline to tRNA(Pro) in a two-step reaction: proline is first activated by ATP to form Pro-AMP and then transferred to the acceptor end of tRNA(Pro). As ProRS can inadvertently accommodate and process non-cognate amino acids such as alanine and cysteine, to avoid such errors it has two additional distinct editing activities against alanine. One activity is designated as 'pretransfer' editing and involves the tRNA(Pro)-independent hydrolysis of activated Ala-AMP. The other activity is designated 'posttransfer' editing and involves deacylation of mischarged Ala-tRNA(Pro). The misacylated Cys-tRNA(Pro) is not edited by ProRS. The chain is Proline--tRNA ligase from Pseudomonas fluorescens (strain ATCC BAA-477 / NRRL B-23932 / Pf-5).